We begin with the raw amino-acid sequence, 141 residues long: Nucleoside diphosphate kinase (141 aa).

Positions 11, 59, 87, 93, 104, and 114 each coordinate ATP. The active-site Pros-phosphohistidine intermediate is the His-117.

Belongs to the NDK family. As to quaternary structure, homotetramer. Mg(2+) is required as a cofactor.

The protein localises to the cytoplasm. The enzyme catalyses a 2'-deoxyribonucleoside 5'-diphosphate + ATP = a 2'-deoxyribonucleoside 5'-triphosphate + ADP. The catalysed reaction is a ribonucleoside 5'-diphosphate + ATP = a ribonucleoside 5'-triphosphate + ADP. In terms of biological role, major role in the synthesis of nucleoside triphosphates other than ATP. The ATP gamma phosphate is transferred to the NDP beta phosphate via a ping-pong mechanism, using a phosphorylated active-site intermediate. This Legionella pneumophila (strain Lens) protein is Nucleoside diphosphate kinase.